A 416-amino-acid polypeptide reads, in one-letter code: Enterobactin exporter EntS (416 aa).

Residues 1–21 (MNKQSWLLNLSLLKTHPAFRA) lie on the Cytoplasmic side of the membrane. Residues 22-42 (VFLARFISIVSLGLLGVAVPV) traverse the membrane as a helical segment. Topologically, residues 43-55 (QIQMMTHSTWLVG) are periplasmic. The chain crosses the membrane as a helical span at residues 56-76 (LSVTLTGGAMFVGLMVGGVLA). Over 77–83 (DRYERKK) the chain is Cytoplasmic. The helical transmembrane segment at 84–104 (VILLARGTCGIGFIGLCLNAL) threads the bilayer. Residues 105–109 (LPEPS) lie on the Periplasmic side of the membrane. A helical membrane pass occupies residues 110–130 (LLAIYLLGLWDGFFASLGVTA). At 131–156 (LLAATPALVGRENLMQAGAITMLTVR) the chain is on the cytoplasmic side. The chain crosses the membrane as a helical span at residues 157–177 (LGSVISPMIGGLLLATGGVAW). Position 178 (Asn-178) is a topological domain, periplasmic. The helical transmembrane segment at 179–199 (YGLAAAGTFITLLPLLSLPAL) threads the bilayer. The Cytoplasmic segment spans residues 200 to 218 (PPPPQPREHPLKSLLAGFR). The helical transmembrane segment at 219-239 (FLLASPLVGGIALLGGLLTMA) threads the bilayer. Over 240–256 (SAVRVLYPALADNWQMS) the chain is Periplasmic. A helical membrane pass occupies residues 257 to 277 (AAEIGFLYAAIPLGAAIGALT). At 278–287 (SGKLAHSARP) the chain is on the cytoplasmic side. The chain crosses the membrane as a helical span at residues 288-307 (GLLMLLSTLGSFLAIGLFGL). The Periplasmic portion of the chain corresponds to 308 to 313 (MPMWIL). A helical membrane pass occupies residues 314-336 (GVVCLALFGWLSAVSSLLQYTML). Residues 337–356 (QTQTPEAMLGRINGLWTAQN) lie on the Cytoplasmic side of the membrane. The helical transmembrane segment at 357 to 377 (VTGDAIGAALLGGLGAMMTPV) threads the bilayer. A topological domain (periplasmic) is located at residue Ala-378. Residues 379–399 (SASASGFGLLIIGVLLLLVLV) form a helical membrane-spanning segment. Over 400 to 416 (ELRRFRQTPPQVTASDS) the chain is Cytoplasmic.

Belongs to the major facilitator superfamily. EntS (TC 2.A.1.38) family.

Its subcellular location is the cell inner membrane. Its function is as follows. Component of an export pathway for enterobactin. This chain is Enterobactin exporter EntS, found in Shigella boydii serotype 4 (strain Sb227).